The sequence spans 177 residues: Outer membrane lipoprotein Blc (177 aa).

A signal peptide spans 1 to 18 (MRLLPLVAAATAAFLVVA). Cysteine 19 is lipidated: N-palmitoyl cysteine. Cysteine 19 carries the S-diacylglycerol cysteine lipid modification.

Belongs to the calycin superfamily. Lipocalin family. In terms of assembly, homodimer.

Its subcellular location is the cell outer membrane. Involved in the storage or transport of lipids necessary for membrane maintenance under stressful conditions. Displays a binding preference for lysophospholipids. This Escherichia coli O157:H7 protein is Outer membrane lipoprotein Blc (blc).